The following is a 69-amino-acid chain: Cytochrome c oxidase subunit 8A, mitochondrial (69 aa).

The N-terminal 25 residues, 1–25, are a transit peptide targeting the mitochondrion; that stretch reads MSVLTPLLLRGLTGSARRLPMPCAR. The SIFI-degron signature appears at 2-19; the sequence is SVLTPLLLRGLTGSARRL. Topologically, residues 26–36 are mitochondrial matrix; that stretch reads VHSKPPREQLG. The chain crosses the membrane as a helical span at residues 37–60; the sequence is TMDIAIGLTSCFVCFLLPSGWVLS. At 61–69 the chain is on the mitochondrial intermembrane side; the sequence is HLENYKKRE.

This sequence belongs to the cytochrome c oxidase VIII family. As to quaternary structure, component of the cytochrome c oxidase (complex IV, CIV), a multisubunit enzyme composed of 14 subunits. The complex is composed of a catalytic core of 3 subunits MT-CO1, MT-CO2 and MT-CO3, encoded in the mitochondrial DNA, and 11 supernumerary subunits COX4I, COX5A, COX5B, COX6A, COX6B, COX6C, COX7A, COX7B, COX7C, COX8 and NDUFA4, which are encoded in the nuclear genome. The complex exists as a monomer or a dimer and forms supercomplexes (SCs) in the inner mitochondrial membrane with NADH-ubiquinone oxidoreductase (complex I, CI) and ubiquinol-cytochrome c oxidoreductase (cytochrome b-c1 complex, complex III, CIII), resulting in different assemblies (supercomplex SCI(1)III(2)IV(1) and megacomplex MCI(2)III(2)IV(2)). In response to mitochondrial stress, the precursor protein is ubiquitinated by the SIFI complex in the cytoplasm before mitochondrial import, leading to its degradation. Within the SIFI complex, UBR4 initiates ubiquitin chain that are further elongated or branched by KCMF1.

It is found in the mitochondrion inner membrane. It participates in energy metabolism; oxidative phosphorylation. Functionally, component of the cytochrome c oxidase, the last enzyme in the mitochondrial electron transport chain which drives oxidative phosphorylation. The respiratory chain contains 3 multisubunit complexes succinate dehydrogenase (complex II, CII), ubiquinol-cytochrome c oxidoreductase (cytochrome b-c1 complex, complex III, CIII) and cytochrome c oxidase (complex IV, CIV), that cooperate to transfer electrons derived from NADH and succinate to molecular oxygen, creating an electrochemical gradient over the inner membrane that drives transmembrane transport and the ATP synthase. Cytochrome c oxidase is the component of the respiratory chain that catalyzes the reduction of oxygen to water. Electrons originating from reduced cytochrome c in the intermembrane space (IMS) are transferred via the dinuclear copper A center (CU(A)) of subunit 2 and heme A of subunit 1 to the active site in subunit 1, a binuclear center (BNC) formed by heme A3 and copper B (CU(B)). The BNC reduces molecular oxygen to 2 water molecules using 4 electrons from cytochrome c in the IMS and 4 protons from the mitochondrial matrix. The chain is Cytochrome c oxidase subunit 8A, mitochondrial (COX8A) from Nycticebus coucang (Slow loris).